The following is a 64-amino-acid chain: MAKAKGARIIITLECTECRTNVNKRSPGVNRYTTTKNRRNTTARLELKKFCPKCNRHTVHKEIK.

Belongs to the bacterial ribosomal protein bL33 family.

In Synechococcus sp. (strain JA-3-3Ab) (Cyanobacteria bacterium Yellowstone A-Prime), this protein is Large ribosomal subunit protein bL33.